We begin with the raw amino-acid sequence, 86 residues long: Small ribosomal subunit protein bS20 (86 aa).

Residues 1–26 are disordered; it reads MANIKSAKKRAITSEKRRQHNASRRS.

Belongs to the bacterial ribosomal protein bS20 family.

Binds directly to 16S ribosomal RNA. The polypeptide is Small ribosomal subunit protein bS20 (Photobacterium profundum (strain SS9)).